A 301-amino-acid polypeptide reads, in one-letter code: NAD kinase 2 (301 aa).

The active-site Proton acceptor is the aspartate 77. NAD(+) is bound by residues 77–78 (DG), arginine 82, 151–152 (NE), lysine 162, aspartate 181, and 192–197 (TAYAFS).

Belongs to the NAD kinase family. A divalent metal cation serves as cofactor.

It is found in the cytoplasm. It carries out the reaction NAD(+) + ATP = ADP + NADP(+) + H(+). Functionally, involved in the regulation of the intracellular balance of NAD and NADP, and is a key enzyme in the biosynthesis of NADP. Catalyzes specifically the phosphorylation on 2'-hydroxyl of the adenosine moiety of NAD to yield NADP. The sequence is that of NAD kinase 2 from Streptomyces coelicolor (strain ATCC BAA-471 / A3(2) / M145).